The following is a 247-amino-acid chain: Protein NipSnap homolog 3B (247 aa).

2 positions are modified to N6-succinyllysine: K45 and K57.

The protein belongs to the NipSnap family.

The polypeptide is Protein NipSnap homolog 3B (NIPSNAP3B) (Homo sapiens (Human)).